The chain runs to 311 residues: Pyrimidine-specific ribonucleoside hydrolase RihA (311 aa).

H240 is an active-site residue.

Belongs to the IUNH family. RihA subfamily.

Functionally, hydrolyzes cytidine or uridine to ribose and cytosine or uracil, respectively. This is Pyrimidine-specific ribonucleoside hydrolase RihA from Salmonella schwarzengrund (strain CVM19633).